The sequence spans 271 residues: Regulatory protein RecX (271 aa).

Belongs to the RecX family.

The protein resides in the cytoplasm. In terms of biological role, modulates RecA activity. The protein is Regulatory protein RecX of Geobacillus sp. (strain WCH70).